Here is a 448-residue protein sequence, read N- to C-terminus: Trigger factor (448 aa).

One can recognise a PPIase FKBP-type domain in the interval 172–257 (GDRVTVDFVG…MKKIEWPHLP (86 aa)).

It belongs to the FKBP-type PPIase family. Tig subfamily.

It is found in the cytoplasm. It carries out the reaction [protein]-peptidylproline (omega=180) = [protein]-peptidylproline (omega=0). Functionally, involved in protein export. Acts as a chaperone by maintaining the newly synthesized protein in an open conformation. Functions as a peptidyl-prolyl cis-trans isomerase. This chain is Trigger factor, found in Burkholderia cenocepacia (strain ATCC BAA-245 / DSM 16553 / LMG 16656 / NCTC 13227 / J2315 / CF5610) (Burkholderia cepacia (strain J2315)).